A 694-amino-acid chain; its full sequence is Elongation factor G 2 (694 aa).

The tr-type G domain occupies 8 to 282 (TAIRNIGIMA…AVVSYLPSPL (275 aa)). GTP is bound by residues 17-24 (AHIDAGKT), 81-85 (DTPGH), and 135-138 (NKMD).

This sequence belongs to the TRAFAC class translation factor GTPase superfamily. Classic translation factor GTPase family. EF-G/EF-2 subfamily.

The protein localises to the cytoplasm. In terms of biological role, catalyzes the GTP-dependent ribosomal translocation step during translation elongation. During this step, the ribosome changes from the pre-translocational (PRE) to the post-translocational (POST) state as the newly formed A-site-bound peptidyl-tRNA and P-site-bound deacylated tRNA move to the P and E sites, respectively. Catalyzes the coordinated movement of the two tRNA molecules, the mRNA and conformational changes in the ribosome. This chain is Elongation factor G 2, found in Syntrophomonas wolfei subsp. wolfei (strain DSM 2245B / Goettingen).